Reading from the N-terminus, the 553-residue chain is MTRLDNSRVIRPATGPEISAKSWLTEAPMRMLMNNLHPDVAEAPHELVVYGGIGRAARDWESYDRIVETLRRLEGDETLLIQSGKPVGVFRTHADAPRVLLANSNLVPQWANWEHFHELDKKGLMMYGQMTAGSWIYIGSQGIVQGTYETFVEMGRQHYGGDLSGRWLLTAGLGGMGGAQPLAAVMAGASCLAIECQPSRIEMRLRTGYLDRQAASIDEALAMIEASHAEDKPVSVGLLGNAAEILPEIVRRGIRPDLLTDQTSAHDPVNGYLPAGWSLDQWFAKRESDPSAVAKAAKASMAVHVRAMLDLHAAGVPTTDYGNNIRQMAKDEGVENAFDFPGFVPAYVRPLFCRGIGPFRWVALSGDPEDIYRTDARVKQLLPDNTHLHNWLDMARERIQFQGLPARICWVGLGDRHRLGLAFNEMVASGELKAPIVIGRDHLDSGSVASPNRETEAMRDGSDAVSDWPLLNALLNTASGATWVSLHHGGGVGMGYSQHSGMVIVADGTPEAAKRLERVLWNDPGTGVMRHADAGYDIAIDCAREKGLDLPSI.

NAD(+)-binding positions include 51-52 (GG), Q129, 175-177 (GMG), E195, R200, 241-242 (NA), 262-266 (QTSAH), 272-273 (YL), and Y321. C409 is a catalytic residue. NAD(+) is bound at residue G491.

The protein belongs to the urocanase family. It depends on NAD(+) as a cofactor.

The protein resides in the cytoplasm. The catalysed reaction is 4-imidazolone-5-propanoate = trans-urocanate + H2O. Its pathway is amino-acid degradation; L-histidine degradation into L-glutamate; N-formimidoyl-L-glutamate from L-histidine: step 2/3. Functionally, catalyzes the conversion of urocanate to 4-imidazolone-5-propionate. The polypeptide is Urocanate hydratase (Sphingopyxis alaskensis (strain DSM 13593 / LMG 18877 / RB2256) (Sphingomonas alaskensis)).